We begin with the raw amino-acid sequence, 155 residues long: Protein E6 (155 aa).

2 zinc fingers span residues 39 to 75 (CNFC…CRCC) and 112 to 148 (CQNC…CRLC).

The protein belongs to the papillomaviridae E6 protein family. As to quaternary structure, forms homodimers. Interacts with ubiquitin-protein ligase UBE3A/E6-AP; this interaction stimulates UBE3A ubiquitin activity. Interacts with host BAK1.

Its subcellular location is the host cytoplasm. The protein resides in the host nucleus. Plays a major role in the induction and maintenance of cellular transformation. E6 associates with host UBE3A/E6-AP ubiquitin-protein ligase and modulates its activity. Protects host keratinocytes from apoptosis by mediating the degradation of host BAK1. May also inhibit host immune response. This is Protein E6 from Homo sapiens (Human).